Here is a 289-residue protein sequence, read N- to C-terminus: Mas-related G-protein coupled receptor member G (289 aa).

Residues 1 to 13 (MLSIFNIWGTFNR) are Extracellular-facing. Residues 14–34 (VLFFLSLTVSLAGLAGNTLLL) form a helical membrane-spanning segment. At 35–49 (WHLGLRIKKGPFNTY) the chain is on the cytoplasmic side. The helical transmembrane segment at 50–70 (LLHLAAADFLFLSCQVGFSIA) threads the bilayer. The Extracellular portion of the chain corresponds to 71-80 (KIASGYEDTL). The helical transmembrane segment at 81–101 (YFPVTFLWFAVGLWLLAAFIV) threads the bilayer. The Cytoplasmic segment spans residues 102 to 123 (DCCLSYMFPSFCGPNCRPRYTS). The helical transmembrane segment at 124–144 (FVLCLVIWALTMLAVLLPANA) threads the bilayer. At 145 to 164 (CGLLYNRMSLLVCLKYHWVS) the chain is on the extracellular side. Residues 165 to 185 (VVWLGVLASTACGASMFLLVF) traverse the membrane as a helical segment. Topologically, residues 186–200 (GNCCSSQPPSKFCKL) are cytoplasmic. The chain crosses the membrane as a helical span at residues 201–221 (AQCSGILLFFCRLPLVFYWCL). A topological domain (extracellular) is located at residue R222. Residues 223-243 (PVIKFLLPFFFPLATLLACID) form a helical membrane-spanning segment. Residues 244–289 (SSAKPLLYYLKGRQLRKEPLQVALNRALGEESQSSSGGISLPMSRV) lie on the Cytoplasmic side of the membrane.

It belongs to the G-protein coupled receptor 1 family. Mas subfamily.

The protein localises to the cell membrane. Orphan receptor. May regulate nociceptor function and/or development, including the sensation or modulation of pain. The protein is Mas-related G-protein coupled receptor member G (Mrgprg) of Rattus norvegicus (Rat).